The sequence spans 1280 residues: Rho guanine nucleotide exchange factor 10-like protein (1280 aa).

The span at 1 to 10 shows a compositional bias: pro residues; that stretch reads MASSNPPPQP. Positions 1–94 are disordered; it reads MASSNPPPQP…TEAPTVVSNG (94 aa). Positions 26–46 are enriched in acidic residues; sequence EVEEDSGEAFEFDDSDEEEDT. S40 is subject to Phosphoserine. Positions 78-89 are enriched in low complexity; the sequence is PAAAPPQTEAPT. Residues Y131 and Y152 each carry the phosphotyrosine modification. The tract at residues 161 to 202 is disordered; that stretch reads PRETEDLGWSSSEFESYSEDSGEETKPEAEPTKHRGSFQPKL. Over residues 183 to 193 the composition is skewed to basic and acidic residues; that stretch reads EETKPEAEPTK. S279 is modified (phosphoserine). In terms of domain architecture, DH spans 314–501; sequence VRRHILGSIV…ETLAEKLNEQ (188 aa). Disordered stretches follow at residues 1133–1163 and 1186–1207; these read QEEA…HTAR and PLLS…SEED.

In terms of assembly, interacts with RHOA, RHOB and RHOC.

The protein localises to the cytoplasm. Acts as a guanine nucleotide exchange factor (GEF) for RHOA, RHOB and RHOC. This Mus musculus (Mouse) protein is Rho guanine nucleotide exchange factor 10-like protein (Arhgef10l).